Consider the following 229-residue polypeptide: MSLLEQLDKNIAASGGLIVSCQPVPGSPLDKPEIVAAMALAAEQAGAVAVRIEGIDNLRVARSLVSVPIIGIIKRDLDDSPVRITPFLDDVDALAQAGAAIIAVDGTARQRPVAVEALLARIHHHHLLAMADCSSVDDGLACQRLGADIIGTTMSGYTTPDTPEEPDLPLVKALHDAGCRVIAEGRYNSPTLAAEAIRYGAWAVTVGSAITRLEHICGWYNDALKKAAS.

The protein belongs to the NanE family.

The enzyme catalyses an N-acyl-D-glucosamine 6-phosphate = an N-acyl-D-mannosamine 6-phosphate. Its pathway is amino-sugar metabolism; N-acetylneuraminate degradation; D-fructose 6-phosphate from N-acetylneuraminate: step 3/5. Functionally, converts N-acetylmannosamine-6-phosphate (ManNAc-6-P) to N-acetylglucosamine-6-phosphate (GlcNAc-6-P). The chain is Putative N-acetylmannosamine-6-phosphate 2-epimerase 2 from Salmonella paratyphi A (strain ATCC 9150 / SARB42).